The following is a 673-amino-acid chain: ATP-dependent DNA helicase Rep (673 aa).

The region spanning 1–280 (MRLNPGQQQA…IKLEQNYRSS (280 aa)) is the UvrD-like helicase ATP-binding domain. Residues 22 to 29 (AGAGSGKT) and R278 contribute to the ATP site. In terms of domain architecture, UvrD-like helicase C-terminal spans 281–562 (GRILKAANIL…QLMTLHASKG (282 aa)).

This sequence belongs to the helicase family. UvrD subfamily. As to quaternary structure, homodimer in association with DNA.

The catalysed reaction is Couples ATP hydrolysis with the unwinding of duplex DNA by translocating in the 3'-5' direction.. It carries out the reaction ATP + H2O = ADP + phosphate + H(+). With respect to regulation, binding to DNA induces dimerization, which is required for DNA helicase activity. Helicase activity is stimulated by PriC. Its function is as follows. Rep helicase is a single-stranded (ss)DNA-dependent ATPase involved in DNA replication; it can initiate unwinding at a nick in the DNA. It binds to ssDNA and acts in a progressive fashion along the DNA in the 3' to 5' direction. Binds double-stranded (ds)DNA with a 5' ss- but not 3' ss-extension and forked structures with either lagging or leading ssDNA. Part of the PriC-Rep pathway for restart of stalled replication forks, which reloads the DnaB replicative helicase on sites other than the origin of replication. The chain is ATP-dependent DNA helicase Rep from Escherichia coli (strain K12).